The sequence spans 71 residues: Protein CYSTEINE-RICH TRANSMEMBRANE MODULE 6 (71 aa).

A compositionally biased stretch (polar residues) spans Met1–Ala12. Residues Met1–Thr36 form a disordered region. Residues Pro14–Gly30 show a composition bias toward pro residues. Residues Ser48–Cys64 form a helical membrane-spanning segment.

It belongs to the CYSTM1 family. Homodimer and heterodimers. Interacts with CYSTM7 and WIH1/CYSTM13. As to expression, mostly expressed in roots, stems, rosette leaves and siliques and, to a lower extent, in flowers and cauline leaves.

It is found in the cell membrane. Its subcellular location is the cytoplasm. Functionally, involved in resistance to abiotic stress. The chain is Protein CYSTEINE-RICH TRANSMEMBRANE MODULE 6 from Arabidopsis thaliana (Mouse-ear cress).